The primary structure comprises 121 residues: Large ribosomal subunit protein uL18 (121 aa).

Belongs to the universal ribosomal protein uL18 family. Part of the 50S ribosomal subunit; part of the 5S rRNA/L5/L18/L25 subcomplex. Contacts the 5S and 23S rRNAs.

In terms of biological role, this is one of the proteins that bind and probably mediate the attachment of the 5S RNA into the large ribosomal subunit, where it forms part of the central protuberance. This is Large ribosomal subunit protein uL18 from Albidiferax ferrireducens (strain ATCC BAA-621 / DSM 15236 / T118) (Rhodoferax ferrireducens).